Here is a 323-residue protein sequence, read N- to C-terminus: Elongation factor P--(R)-beta-lysine ligase (323 aa).

Residue 74–76 (SPE) coordinates substrate. Residues 98–100 (RNE) and N107 contribute to the ATP site. Y116 provides a ligand contact to substrate. ATP is bound at residue 242 to 243 (EL). E249 lines the substrate pocket. Position 298 (G298) interacts with ATP.

This sequence belongs to the class-II aminoacyl-tRNA synthetase family. EpmA subfamily. Homodimer.

It catalyses the reaction D-beta-lysine + L-lysyl-[protein] + ATP = N(6)-((3R)-3,6-diaminohexanoyl)-L-lysyl-[protein] + AMP + diphosphate + H(+). In terms of biological role, with EpmB is involved in the beta-lysylation step of the post-translational modification of translation elongation factor P (EF-P). Catalyzes the ATP-dependent activation of (R)-beta-lysine produced by EpmB, forming a lysyl-adenylate, from which the beta-lysyl moiety is then transferred to the epsilon-amino group of a conserved specific lysine residue in EF-P. This is Elongation factor P--(R)-beta-lysine ligase from Vibrio campbellii (strain ATCC BAA-1116).